The following is a 386-amino-acid chain: Formate-dependent phosphoribosylglycinamide formyltransferase (386 aa).

N(1)-(5-phospho-beta-D-ribosyl)glycinamide is bound by residues 15 to 16 (EL) and glutamate 75. Residues arginine 107, lysine 148, 153 to 158 (SSGKGQ), 188 to 191 (EQFI), and glutamate 196 each bind ATP. The 190-residue stretch at 112 to 301 (ALAAQQLNLQ…EFELHLRAIV (190 aa)) folds into the ATP-grasp domain. The Mg(2+) site is built by glutamate 260 and glutamate 272. Residues aspartate 279, lysine 349, and 356 to 357 (RR) contribute to the N(1)-(5-phospho-beta-D-ribosyl)glycinamide site.

It belongs to the PurK/PurT family. In terms of assembly, homodimer.

It catalyses the reaction N(1)-(5-phospho-beta-D-ribosyl)glycinamide + formate + ATP = N(2)-formyl-N(1)-(5-phospho-beta-D-ribosyl)glycinamide + ADP + phosphate + H(+). It functions in the pathway purine metabolism; IMP biosynthesis via de novo pathway; N(2)-formyl-N(1)-(5-phospho-D-ribosyl)glycinamide from N(1)-(5-phospho-D-ribosyl)glycinamide (formate route): step 1/1. In terms of biological role, involved in the de novo purine biosynthesis. Catalyzes the transfer of formate to 5-phospho-ribosyl-glycinamide (GAR), producing 5-phospho-ribosyl-N-formylglycinamide (FGAR). Formate is provided by PurU via hydrolysis of 10-formyl-tetrahydrofolate. This is Formate-dependent phosphoribosylglycinamide formyltransferase from Francisella tularensis subsp. tularensis (strain WY96-3418).